The following is a 126-amino-acid chain: 5-carboxymethyl-2-hydroxymuconate Delta-isomerase (126 aa).

The Proton acceptor; via imino nitrogen role is filled by proline 2.

In terms of assembly, homotrimer.

It carries out the reaction (2E,4Z)-5-hydroxypenta-2,4-diene-1,2,5-tricarboxylate = (3E,5R)-5-carboxy-2-oxohept-3-enedioate. It participates in aromatic compound metabolism; 4-hydroxyphenylacetate degradation; pyruvate and succinate semialdehyde from 4-hydroxyphenylacetate: step 4/7. Its function is as follows. Transforms 5-carboxymethyl-2-hydroxy-muconic acid (CHM) into 5-oxo-pent-3-ene-1,2,5-tricarboxylic acid (OPET). This is 5-carboxymethyl-2-hydroxymuconate Delta-isomerase (hpcD) from Escherichia coli.